Reading from the N-terminus, the 157-residue chain is RNA-binding protein 3 (157 aa).

The RRM domain occupies 6-84 (GKLFVGGLNF…RQIRVDHAGK (79 aa)). Omega-N-methylarginine is present on Arg-47. Positions 81–157 (HAGKSARGTR…GGNYRDNYDN (77 aa)) are disordered. Residue Arg-105 is modified to Asymmetric dimethylarginine; alternate. Position 105 is a dimethylated arginine; in A2780 ovarian carcinoma cell line (Arg-105). Residue Arg-105 is modified to Omega-N-methylarginine; alternate. Over residues 105-114 (RGGGDQGYGS) the composition is skewed to gly residues. Arg-121 and Arg-131 each carry omega-N-methylarginine. Ser-147 bears the Phosphoserine mark. Tyr-155 bears the Phosphotyrosine mark.

In terms of assembly, interacts with RPL4. Associates with the 60S ribosomal subunits in an RNA-independent manner. Associates with ribosomes. In terms of processing, arg-105 is dimethylated, probably to asymmetric dimethylarginine. Phosphorylated.

It is found in the nucleus. The protein localises to the cytoplasm. Its subcellular location is the cell projection. The protein resides in the dendrite. Its function is as follows. Cold-inducible mRNA binding protein that enhances global protein synthesis at both physiological and mild hypothermic temperatures. Reduces the relative abundance of microRNAs, when overexpressed. Enhances phosphorylation of translation initiation factors and active polysome formation. The protein is RNA-binding protein 3 (RBM3) of Homo sapiens (Human).